The sequence spans 92 residues: Small ribosomal subunit protein uS19c (92 aa).

The protein belongs to the universal ribosomal protein uS19 family.

It localises to the plastid. It is found in the chloroplast. Functionally, protein S19 forms a complex with S13 that binds strongly to the 16S ribosomal RNA. The protein is Small ribosomal subunit protein uS19c of Amborella trichopoda.